We begin with the raw amino-acid sequence, 168 residues long: Transcription antitermination protein NusB (168 aa).

The protein belongs to the NusB family.

Its function is as follows. Involved in transcription antitermination. Required for transcription of ribosomal RNA (rRNA) genes. Binds specifically to the boxA antiterminator sequence of the ribosomal RNA (rrn) operons. The protein is Transcription antitermination protein NusB of Chlamydia trachomatis serovar D (strain ATCC VR-885 / DSM 19411 / UW-3/Cx).